A 174-amino-acid chain; its full sequence is ATP-dependent protease subunit HslV (174 aa).

Thr-2 is an active-site residue. Na(+) contacts are provided by Gly-157, Cys-160, and Thr-163.

The protein belongs to the peptidase T1B family. HslV subfamily. A double ring-shaped homohexamer of HslV is capped on each side by a ring-shaped HslU homohexamer. The assembly of the HslU/HslV complex is dependent on binding of ATP.

The protein resides in the cytoplasm. It catalyses the reaction ATP-dependent cleavage of peptide bonds with broad specificity.. With respect to regulation, allosterically activated by HslU binding. In terms of biological role, protease subunit of a proteasome-like degradation complex believed to be a general protein degrading machinery. The polypeptide is ATP-dependent protease subunit HslV (Shewanella loihica (strain ATCC BAA-1088 / PV-4)).